The chain runs to 274 residues: TATA box-binding protein-associated factor RNA polymerase I subunit D (274 aa).

Residues 1–19 (MDSLNYTTACDSAVETENQ) are compositionally biased toward polar residues. 2 disordered regions span residues 1–45 (MDSL…RQRN) and 84–111 (NKKR…RTTR). Position 20 is a phosphoserine (Ser-20). Residues 84-110 (NKKRKRKKKKYKPTGRSVGRPKGRRTT) show a composition bias toward basic residues. Phosphoserine is present on residues Ser-132 and Ser-229.

As to quaternary structure, component of the transcription factor SL1/TIF-IB complex, composed of TBP and at least TAF1A, TAF1B, TAF1C and TAF1D. Interacts with UBTF.

The protein localises to the nucleus. Functionally, component of the transcription factor SL1/TIF-IB complex, which is involved in the assembly of the PIC (preinitiation complex) during RNA polymerase I-dependent transcription. The rate of PIC formation probably is primarily dependent on the rate of association of SL1/TIF-IB with the rDNA promoter. SL1/TIF-IB is involved in stabilization of nucleolar transcription factor 1/UBTF on rDNA. Formation of SL1/TIF-IB excludes the association of TBP with TFIID subunits. The chain is TATA box-binding protein-associated factor RNA polymerase I subunit D (TAF1D) from Bos taurus (Bovine).